A 157-amino-acid chain; its full sequence is MSRRHRAVKRQVEPDIRYKSPLVAHLVNVIMKSGKKNLAQRIVYGAFEKVSEKLEKGDPVDLLLGALENARPRLEVKSRRVGGATYQVPIEISFERQESLALRWIVDAASGRKGIPMKEALAAEIIDAYNNTGNVVKKKEDTHKMAQANRAFAHLRW.

This sequence belongs to the universal ribosomal protein uS7 family. In terms of assembly, part of the 30S ribosomal subunit. Contacts proteins S9 and S11.

Its function is as follows. One of the primary rRNA binding proteins, it binds directly to 16S rRNA where it nucleates assembly of the head domain of the 30S subunit. Is located at the subunit interface close to the decoding center, probably blocks exit of the E-site tRNA. The chain is Small ribosomal subunit protein uS7 from Opitutus terrae (strain DSM 11246 / JCM 15787 / PB90-1).